We begin with the raw amino-acid sequence, 233 residues long: Probable GTP-binding protein EngB (233 aa).

Residues 21 to 228 (GLPEVALVGR…WRWIREHVQD (208 aa)) form the EngB-type G domain. GTP is bound by residues 29 to 36 (GRSNVGKS) and 56 to 60 (GRTQA). Residues Ser36 and Thr58 each contribute to the Mg(2+) site. The tract at residues 68–87 (PQGKPRPEGEPQPDKDAGRT) is disordered. Positions 72–85 (PRPEGEPQPDKDAG) are enriched in basic and acidic residues. Residues 107 to 110 (DMPG), 174 to 177 (TKAD), and 207 to 209 (FSA) contribute to the GTP site.

This sequence belongs to the TRAFAC class TrmE-Era-EngA-EngB-Septin-like GTPase superfamily. EngB GTPase family. Mg(2+) is required as a cofactor.

Its function is as follows. Necessary for normal cell division and for the maintenance of normal septation. The sequence is that of Probable GTP-binding protein EngB from Symbiobacterium thermophilum (strain DSM 24528 / JCM 14929 / IAM 14863 / T).